A 604-amino-acid polypeptide reads, in one-letter code: Glutamyl-tRNA(Gln) amidotransferase subunit B, mitochondrial (604 aa).

The N-terminal 48 residues, 1–48 (MIRQCLSRRGAYSRYRLAARGVELAEPFHHQSSRPQGRRNWSSSPRCS), are a transit peptide targeting the mitochondrion. Positions 28–57 (FHHQSSRPQGRRNWSSSPRCSLDIRTDTPR) are disordered. Positions 33 to 46 (SRPQGRRNWSSSPR) are enriched in polar residues.

The protein belongs to the GatB/GatE family. GatB subfamily. Subunit of the heterotrimeric GatCAB amidotransferase (AdT) complex, composed of A, B and C subunits.

Its subcellular location is the mitochondrion. The enzyme catalyses L-glutamyl-tRNA(Gln) + L-glutamine + ATP + H2O = L-glutaminyl-tRNA(Gln) + L-glutamate + ADP + phosphate + H(+). Its function is as follows. Allows the formation of correctly charged Gln-tRNA(Gln) through the transamidation of misacylated Glu-tRNA(Gln) in the mitochondria. The reaction takes place in the presence of glutamine and ATP through an activated gamma-phospho-Glu-tRNA(Gln). The polypeptide is Glutamyl-tRNA(Gln) amidotransferase subunit B, mitochondrial (Ajellomyces dermatitidis (strain ER-3 / ATCC MYA-2586) (Blastomyces dermatitidis)).